A 200-amino-acid polypeptide reads, in one-letter code: Superoxide dismutase [Mn] 1 (200 aa).

Residues histidine 29, histidine 76, aspartate 158, and histidine 162 each contribute to the Mn(2+) site.

Belongs to the iron/manganese superoxide dismutase family. Homodimer or homotetramer. Mn(2+) is required as a cofactor.

The enzyme catalyses 2 superoxide + 2 H(+) = H2O2 + O2. Inhibited by hydrogen peroxide. Is resistant to cyanide and azide inhibition. Functionally, destroys superoxide anion radicals which are normally produced within the cells and which are toxic to biological systems. This Halobacterium salinarum (strain ATCC 700922 / JCM 11081 / NRC-1) (Halobacterium halobium) protein is Superoxide dismutase [Mn] 1 (sod1).